A 298-amino-acid polypeptide reads, in one-letter code: MTDLHTDVERYLRYLSVERQLSPITLLNYQRQLEAIINFASENGLQSWQQCDVTMVRNFAVRSRRKGLGAASLALRLSALRSFFDWLVSQNELKANPAKGVSAPKAPRHLPKNIDVDDMNRLLDIDINDPLAVRDRAMLEVMYGAGLRLSELVGLDIKHLDLESGEVWVMGKGSKERRLPIGRNAVAWIEHWLDLRNLFGSEDDALFLSKLGKRISARNVQKRFAEWGIKQGLNNHVHPHKLRHSFATHMLESSGDLRGVQELLGHANLSTTQIYTHLDFQHLASVYDAAHPRAKRGK.

One can recognise a Core-binding (CB) domain in the interval 2–88 (TDLHTDVERY…ALRSFFDWLV (87 aa)). A Tyr recombinase domain is found at 109–288 (HLPKNIDVDD…DFQHLASVYD (180 aa)). Active-site residues include R148, K172, H240, R243, and H266. Y275 (O-(3'-phospho-DNA)-tyrosine intermediate) is an active-site residue.

This sequence belongs to the 'phage' integrase family. XerC subfamily. Forms a cyclic heterotetrameric complex composed of two molecules of XerC and two molecules of XerD, in which XerC interacts with XerD via its C-terminal region, XerD interacts with XerC via its C-terminal region and so on.

The protein localises to the cytoplasm. With respect to regulation, ftsK may regulate the catalytic switch between XerC and XerD in the heterotetrameric complex during the two steps of the recombination process. Functionally, site-specific tyrosine recombinase, which acts by catalyzing the cutting and rejoining of the recombining DNA molecules. Binds cooperatively to specific DNA consensus sequences that are separated from XerD binding sites by a short central region, forming the heterotetrameric XerC-XerD complex that recombines DNA substrates. The complex is essential to convert dimers of the bacterial chromosome into monomers to permit their segregation at cell division. It also contributes to the segregational stability of plasmids. In the complex XerC specifically exchanges the top DNA strands. This Escherichia coli O127:H6 (strain E2348/69 / EPEC) protein is Tyrosine recombinase XerC.